A 777-amino-acid polypeptide reads, in one-letter code: Zygote defective protein 12 (777 aa).

2 stretches are compositionally biased toward basic and acidic residues: residues 1–10 and 18–36; these read MLDLTNKESE and KYED…PFKE. The tract at residues 1-36 is disordered; it reads MLDLTNKESESSDNGNSKYEDSIDGREVGTSKPFKE. The segment at 1 to 234 is interaction with dli-1; that stretch reads MLDLTNKESE…ESSGKLNGNG (234 aa). The Calponin-homology (CH) domain occupies 44 to 169; that stretch reads QADLADMAVW…VTLAHIGKNA (126 aa). 2 disordered regions span residues 217-242 and 273-292; these read QSEL…RSNA and SFET…DISI. Residues 218 to 235 show a composition bias toward low complexity; sequence SELNSLSESSGKLNGNGS. Coiled-coil stretches lie at residues 236 to 399 and 425 to 688; these read SERR…HHVK and NTEL…QENR. Positions 273 to 288 are enriched in polar residues; it reads SFETAQHDMSSNSESG. Residues 747 to 767 traverse the membrane as a helical segment; sequence AMASILVLGFLVFIAWMFINI. Residues 749–777 form an interaction with unc-84 region; it reads ASILVLGFLVFIAWMFININSALNAPPNA.

Belongs to the hook family. In terms of assembly, homodimer. Interacts with the dynein subunit dli-1 via its N-terminus. May interact with microtubules. Interacts with sut-2. Interacts (via C-terminus) with unc-84 (via C-terminus); the interaction is direct. As to expression, expressed in the syncytial gonad, oocytes, and in all cells during the development of the early embryo.

The protein resides in the nucleus membrane. The protein localises to the cytoplasm. Its subcellular location is the cytoskeleton. It is found in the microtubule organizing center. It localises to the centrosome. Its function is as follows. Cytoskeletal linker protein, which is essential for attachment of the centrosome to the nucleus. Required for dynein localization to the nuclear envelope. Forms a LINC (LInker of Nucleoskeleton and Cytoskeleton) complex together with unc-84, that may be involved in DNA damage repair. The sequence is that of Zygote defective protein 12 from Caenorhabditis elegans.